The chain runs to 147 residues: Ponticulin-like protein C1 (147 aa).

The first 20 residues, 1-20, serve as a signal peptide directing secretion; that stretch reads MKFTKSLLLLIVAVFASSNA. The GPI-like-anchor amidated asparagine moiety is linked to residue Asn-118. N-linked (GlcNAc...) asparagine glycosylation occurs at Asn-118. Residues 119–147 constitute a propeptide, removed in mature form; that stretch reads SSESDSSDSTRIGASFALAASVLLSMLAI.

The protein belongs to the ponticulin family. Post-translationally, the GPI-like-anchor contains a phosphoceramide group, rather than a phosphatidyl group.

Its subcellular location is the cell membrane. This chain is Ponticulin-like protein C1 (ponC1), found in Dictyostelium discoideum (Social amoeba).